A 480-amino-acid chain; its full sequence is Adenosylhomocysteinase (480 aa).

Substrate is bound by residues threonine 63, aspartate 142, and glutamate 203. NAD(+) is bound at residue 204-206 (TTT). Residues lysine 233 and aspartate 237 each contribute to the substrate site. NAD(+) is bound by residues asparagine 238, 267–272 (GYGDVG), glutamate 290, asparagine 325, 346–348 (IGH), and asparagine 394.

The protein belongs to the adenosylhomocysteinase family. Requires NAD(+) as cofactor.

The protein resides in the cytoplasm. The enzyme catalyses S-adenosyl-L-homocysteine + H2O = L-homocysteine + adenosine. It participates in amino-acid biosynthesis; L-homocysteine biosynthesis; L-homocysteine from S-adenosyl-L-homocysteine: step 1/1. Its function is as follows. May play a key role in the regulation of the intracellular concentration of adenosylhomocysteine. The chain is Adenosylhomocysteinase from Xanthomonas campestris pv. campestris (strain 8004).